The chain runs to 252 residues: Mating-type switching protein swi10 (252 aa).

Residues Thr-76–Arg-98 mediate DNA binding.

The protein belongs to the ERCC1/RAD10/SWI10 family. Heterodimer composed of rad16 and swi10.

Its subcellular location is the nucleus. Functionally, involved in termination of copy-synthesis during mating-type switching. Involved in nucleotide excision repair of DNA damaged with UV light, bulky adducts, or cross-linking agents. Along with RAD16 forms an endonuclease that specifically degrades single-stranded DNA. In Schizosaccharomyces pombe (strain 972 / ATCC 24843) (Fission yeast), this protein is Mating-type switching protein swi10 (swi10).